The following is a 167-amino-acid chain: Plastocyanin major isoform, chloroplastic (167 aa).

Residues 1-52 (MASVTSATVAIPSFTGLKASTIKSSATVRIQTAAVASPKLTVKSSLKNFGVA) constitute a chloroplast transit peptide. The N-terminal 16 residues, 53 to 68 (AVAAAASIALAGNAMA), are a transit peptide targeting the thylakoid. One can recognise a Plastocyanin-like domain in the interval 69–167 (IEVLLGGGDG…AGMVGKVTVN (99 aa)). Residues His-105, Cys-152, His-155, and Met-160 each coordinate Cu cation.

This sequence belongs to the plastocyanin family. Requires Cu(2+) as cofactor.

It localises to the plastid. Its subcellular location is the chloroplast thylakoid membrane. Functionally, participates in electron transfer between P700 and the cytochrome b6-f complex in photosystem I. Seems to be the major plastocyanin in Arabidopsis. In Arabidopsis thaliana (Mouse-ear cress), this protein is Plastocyanin major isoform, chloroplastic (DRT112).